The sequence spans 247 residues: Probable transcriptional regulatory protein YPK_2146 (247 aa).

It belongs to the TACO1 family.

It localises to the cytoplasm. This chain is Probable transcriptional regulatory protein YPK_2146, found in Yersinia pseudotuberculosis serotype O:3 (strain YPIII).